A 163-amino-acid chain; its full sequence is Nucleotide-binding protein HS_0688 (163 aa).

It belongs to the YajQ family.

Nucleotide-binding protein. This is Nucleotide-binding protein HS_0688 from Histophilus somni (strain 129Pt) (Haemophilus somnus).